A 332-amino-acid chain; its full sequence is Ribosomal RNA small subunit methyltransferase C (332 aa).

It belongs to the methyltransferase superfamily. RsmC family. In terms of assembly, monomer.

The protein localises to the cytoplasm. The catalysed reaction is guanosine(1207) in 16S rRNA + S-adenosyl-L-methionine = N(2)-methylguanosine(1207) in 16S rRNA + S-adenosyl-L-homocysteine + H(+). Functionally, specifically methylates the guanine in position 1207 of 16S rRNA in the 30S particle. The sequence is that of Ribosomal RNA small subunit methyltransferase C from Pseudomonas putida (strain ATCC 700007 / DSM 6899 / JCM 31910 / BCRC 17059 / LMG 24140 / F1).